A 108-amino-acid polypeptide reads, in one-letter code: Phosphoribosyl-ATP pyrophosphatase (108 aa).

The protein belongs to the PRA-PH family.

It is found in the cytoplasm. The enzyme catalyses 1-(5-phospho-beta-D-ribosyl)-ATP + H2O = 1-(5-phospho-beta-D-ribosyl)-5'-AMP + diphosphate + H(+). It functions in the pathway amino-acid biosynthesis; L-histidine biosynthesis; L-histidine from 5-phospho-alpha-D-ribose 1-diphosphate: step 2/9. In Pelobacter propionicus (strain DSM 2379 / NBRC 103807 / OttBd1), this protein is Phosphoribosyl-ATP pyrophosphatase.